Consider the following 546-residue polypeptide: Chaperonin GroEL 2 (546 aa).

ATP contacts are provided by residues 29–32 (TLGP), 86–90 (DGTTT), Gly-418, 482–484 (NAA), and Asp-498.

The protein belongs to the chaperonin (HSP60) family. As to quaternary structure, forms a cylinder of 14 subunits composed of two heptameric rings stacked back-to-back. Interacts with the co-chaperonin GroES.

The protein localises to the cytoplasm. The enzyme catalyses ATP + H2O + a folded polypeptide = ADP + phosphate + an unfolded polypeptide.. Functionally, together with its co-chaperonin GroES, plays an essential role in assisting protein folding. The GroEL-GroES system forms a nano-cage that allows encapsulation of the non-native substrate proteins and provides a physical environment optimized to promote and accelerate protein folding. The chain is Chaperonin GroEL 2 from Corynebacterium diphtheriae (strain ATCC 700971 / NCTC 13129 / Biotype gravis).